Consider the following 223-residue polypeptide: Adenylate kinase 4, mitochondrial (223 aa).

15–20 (GSGKGT) contributes to the a ribonucleoside 5'-triphosphate binding site. The tract at residues 35–64 (SSGHFLRENIKANTEVGDMAKQYIEKGLLV) is NMP. AMP is bound by residues serine 36 and arginine 41. At lysine 60 the chain carries N6-succinyllysine. AMP-binding positions include 62–64 (LLV), 89–92 (GFPR), and glutamine 96. Positions 125 to 162 (RRWIHPPSGRVYNLDFNPPHVHGMDDVTGEPLVQQEDD) are LID. A ribonucleoside 5'-triphosphate-binding positions include arginine 126 and 135-136 (VY). Arginine 170 serves as a coordination point for AMP. Lysine 175 is modified (N6-acetyllysine). An N6-acetyllysine; alternate mark is found at lysine 179 and lysine 186. Lysine 179 and lysine 186 each carry N6-succinyllysine; alternate. Threonine 199 provides a ligand contact to a ribonucleoside 5'-triphosphate.

The protein belongs to the adenylate kinase family. AK3 subfamily. Monomer. Interacts with SLC25A5/ANT2.

It is found in the mitochondrion matrix. It catalyses the reaction a ribonucleoside 5'-phosphate + ATP = a ribonucleoside 5'-diphosphate + ADP. The catalysed reaction is AMP + ATP = 2 ADP. It carries out the reaction GTP + AMP = GDP + ADP. The enzyme catalyses CMP + ATP = CDP + ADP. It catalyses the reaction GTP + CMP = CDP + GDP. The catalysed reaction is dAMP + ATP = dADP + ADP. It carries out the reaction dCMP + ATP = dCDP + ADP. The enzyme catalyses a 2'-deoxyribonucleoside 5'-diphosphate + ATP = a 2'-deoxyribonucleoside 5'-triphosphate + ADP. It catalyses the reaction a ribonucleoside 5'-diphosphate + ATP = a ribonucleoside 5'-triphosphate + ADP. The catalysed reaction is GDP + ATP = GTP + ADP. It carries out the reaction CDP + GTP = CTP + GDP. The enzyme catalyses CDP + ATP = CTP + ADP. It catalyses the reaction UDP + ATP = UTP + ADP. The catalysed reaction is GTP + UDP = UTP + GDP. It carries out the reaction dADP + GTP = dATP + GDP. The enzyme catalyses dCDP + GTP = dCTP + GDP. It catalyses the reaction dCDP + ATP = dCTP + ADP. The catalysed reaction is dGDP + ATP = dGTP + ADP. It carries out the reaction dTDP + GTP = dTTP + GDP. The enzyme catalyses dTDP + ATP = dTTP + ADP. Broad-specificity mitochondrial nucleoside phosphate kinase involved in cellular nucleotide homeostasis by catalyzing nucleoside-phosphate interconversions. Similar to other adenylate kinases, preferentially catalyzes the phosphorylation of the nucleoside monophosphate AMP with ATP as phosphate donor to produce ADP. Phosphorylates only AMP when using GTP as phosphate donor. In vitro, can also catalyze the phosphorylation of CMP, dAMP and dCMP and use GTP as an alternate phosphate donor. Moreover, exhibits a diphosphate kinase activity, producing ATP, CTP, GTP, UTP, TTP, dATP, dCTP and dGTP from the corresponding diphosphate substrates with either ATP or GTP as phosphate donors. Plays a role in controlling cellular ATP levels by regulating phosphorylation and activation of the energy sensor protein kinase AMPK. Plays a protective role in the cellular response to oxidative stress. This chain is Adenylate kinase 4, mitochondrial, found in Bos taurus (Bovine).